We begin with the raw amino-acid sequence, 1171 residues long: Topoisomerase 1-associated factor 1 (1171 aa).

2 disordered regions span residues 568-592 (RRKQ…DSDT) and 880-1171 (PAED…DSDS). Residues 887–910 (VDPRDLMRRKRTAADTDSSRHEFT) are compositionally biased toward basic and acidic residues. Positions 938-950 (ALKTLKQRRRRRR) are enriched in basic residues. Positions 954 to 964 (DAEESGPDEAV) are enriched in acidic residues. Residues 965 to 993 (LEARRTAREKNALERQRKIKSDLYVHASD) are compositionally biased toward basic and acidic residues. Residues 1033-1048 (TKKKSKASAGRKRKVK) are compositionally biased toward basic residues. Positions 1085 to 1100 (GSTSPRRSQTPPTSAD) are enriched in polar residues.

This sequence belongs to the timeless family. In terms of assembly, component of the fork protection complex (FPC) consisting of TOF1 and CSM3.

It is found in the nucleus. Functionally, forms a fork protection complex (FPC) with CSM3 and which is required for chromosome segregation during meiosis and DNA damage repair. FPC coordinates leading and lagging strand synthesis and moves with the replication fork. FPC stabilizes replication forks in a configuration that is recognized by replication checkpoint sensors. The chain is Topoisomerase 1-associated factor 1 (TOF1) from Coccidioides immitis (strain RS) (Valley fever fungus).